We begin with the raw amino-acid sequence, 209 residues long: uncharacterized protein (209 aa).

One can recognise an MPN domain in the interval methionine 1–aspartate 67. Histidine 17, histidine 19, and aspartate 30 together coordinate Zn(2+). The short motif at histidine 17–aspartate 30 is the JAMM motif element.

This is an uncharacterized protein from Acidianus convivator (ATV).